We begin with the raw amino-acid sequence, 725 residues long: Methionine--tRNA ligase (725 aa).

The 'HIGH' region signature appears at 27 to 37 (PYANGQIHIGH). Cys158, Cys161, Cys171, and Cys174 together coordinate Zn(2+). Positions 348 to 352 (KMSKS) match the 'KMSKS' region motif. Lys351 lines the ATP pocket. The region spanning 619–725 (DFAKIDLRIA…SGAKPGMRVK (107 aa)) is the tRNA-binding domain.

This sequence belongs to the class-I aminoacyl-tRNA synthetase family. MetG type 1 subfamily. As to quaternary structure, homodimer. Requires Zn(2+) as cofactor.

The protein localises to the cytoplasm. The enzyme catalyses tRNA(Met) + L-methionine + ATP = L-methionyl-tRNA(Met) + AMP + diphosphate. In terms of biological role, is required not only for elongation of protein synthesis but also for the initiation of all mRNA translation through initiator tRNA(fMet) aminoacylation. In Burkholderia pseudomallei (strain 1106a), this protein is Methionine--tRNA ligase.